Here is a 393-residue protein sequence, read N- to C-terminus: Phosphoglycerate kinase (393 aa).

Substrate-binding positions include 21–23 (DIN), R36, 59–62 (HFGR), R114, and R147. ATP-binding positions include K197, E319, and 349–352 (GGDT).

Belongs to the phosphoglycerate kinase family. As to quaternary structure, monomer.

The protein resides in the cytoplasm. The catalysed reaction is (2R)-3-phosphoglycerate + ATP = (2R)-3-phospho-glyceroyl phosphate + ADP. It functions in the pathway carbohydrate degradation; glycolysis; pyruvate from D-glyceraldehyde 3-phosphate: step 2/5. The polypeptide is Phosphoglycerate kinase (Dinoroseobacter shibae (strain DSM 16493 / NCIMB 14021 / DFL 12)).